A 577-amino-acid chain; its full sequence is Arginine--tRNA ligase (577 aa).

The 'HIGH' region motif lies at 123–133; it reads PNVAKEMHVGH.

It belongs to the class-I aminoacyl-tRNA synthetase family. As to quaternary structure, monomer.

The protein resides in the cytoplasm. It carries out the reaction tRNA(Arg) + L-arginine + ATP = L-arginyl-tRNA(Arg) + AMP + diphosphate. The chain is Arginine--tRNA ligase from Cronobacter sakazakii (strain ATCC BAA-894) (Enterobacter sakazakii).